The sequence spans 110 residues: Envelope glycoprotein N (110 aa).

The signal sequence occupies residues 1–17; sequence MTASTVALALFVASILG. Over 18-80 the chain is Virion surface; it reads HCWVTANSTG…SLSSFSSVWA (63 aa). Residues 28–41 show a composition bias toward polar residues; the sequence is VASSTERSSPSTAG. The disordered stretch occupies residues 28–51; the sequence is VASSTERSSPSTAGLSARPSPGPT. Residues 81-101 form a helical membrane-spanning segment; the sequence is LINALLVVVATFFYLVYLCFF. The Intravirion segment spans residues 102–110; that stretch reads KFVDEVVHA.

This sequence belongs to the herpesviridae glycoprotein N family. In terms of assembly, interacts (via N-terminus) with gM (via N-terminus). The gM-gN heterodimer forms the gCII complex. O-glycosylated. Contains alpha 2,6-sialic acid residues. N-glycosylated.

It localises to the virion membrane. The protein resides in the host membrane. The protein localises to the host Golgi apparatus. It is found in the host trans-Golgi network. In terms of biological role, envelope glycoprotein necessary for proper maturation of gM and modulation of its membrane fusion activity. Also plays a critical role in virion morphogenesis. The protein is Envelope glycoprotein N of Homo sapiens (Human).